A 393-amino-acid polypeptide reads, in one-letter code: Cyclin CCL1 (393 aa).

Residues 1-19 (MTDIQLNGKSTLDTPSATM) show a composition bias toward polar residues. 2 disordered regions span residues 1 to 45 (MTDI…RISD) and 289 to 325 (SREG…SEEY). 2 stretches are compositionally biased toward basic and acidic residues: residues 21 to 35 (AKEK…DENN) and 300 to 321 (NEKE…KSTE).

The protein belongs to the cyclin family. Cyclin C subfamily. In terms of assembly, CCL1 and KIN28 form the TFIIK complex, a component of TFIIH holo complex. Component of a complex consisting of KIN28, CCL1 and TFB3.

Regulatory component of the TFIIK complex (KIN28-CCL1 dimer) which is the protein kinase component of transcription factor IIH (TFIIH) and phosphorylates the C-terminal domain of RNA polymerase II during transition from transcription to elongation after preinitiation complex (PIC) formation, thereby positively regulating transcription. TFIIH (or factor B) is essential for both basal and activated transcription, and is involved in nucleotide excision repair (NER) of damaged DNA. TFIIH has DNA-dependent ATPase activity and is essential for polymerase II transcription in vitro. This Saccharomyces cerevisiae (strain ATCC 204508 / S288c) (Baker's yeast) protein is Cyclin CCL1 (CCL1).